A 289-amino-acid polypeptide reads, in one-letter code: Elongation factor Ts (289 aa).

An involved in Mg(2+) ion dislocation from EF-Tu region spans residues 82–85 (TDFV).

The protein belongs to the EF-Ts family.

Its subcellular location is the cytoplasm. Associates with the EF-Tu.GDP complex and induces the exchange of GDP to GTP. It remains bound to the aminoacyl-tRNA.EF-Tu.GTP complex up to the GTP hydrolysis stage on the ribosome. This chain is Elongation factor Ts, found in Marinobacter nauticus (strain ATCC 700491 / DSM 11845 / VT8) (Marinobacter aquaeolei).